A 230-amino-acid polypeptide reads, in one-letter code: Exosome complex component Rrp4 (230 aa).

The 70-residue stretch at 60-129 (NDKVIGKVID…EIKESWLSLK (70 aa)) folds into the S1 motif domain. The KH domain occupies 137–195 (EEGSIIYIKAPKVPRVIGKAGNMINMIKSETNTKIIVGQNGLIWIDGEPENVDLAINAI).

It belongs to the RRP4 family. As to quaternary structure, component of the archaeal exosome complex. Forms a trimer of Rrp4 and/or Csl4 subunits. The trimer associates with a hexameric ring-like arrangement composed of 3 Rrp41-Rrp42 heterodimers.

Its subcellular location is the cytoplasm. Its function is as follows. Non-catalytic component of the exosome, which is a complex involved in RNA degradation. Increases the RNA binding and the efficiency of RNA degradation. Confers strong poly(A) specificity to the exosome. The chain is Exosome complex component Rrp4 from Picrophilus torridus (strain ATCC 700027 / DSM 9790 / JCM 10055 / NBRC 100828 / KAW 2/3).